Reading from the N-terminus, the 199-residue chain is Recombination protein RecR (199 aa).

The C4-type zinc finger occupies 58-73; sequence CKKCFNLTSEDECEIC. The region spanning 81 to 175 is the Toprim domain; the sequence is KLICVVSETK…KVTRIAYGLP (95 aa).

Belongs to the RecR family.

Its function is as follows. May play a role in DNA repair. It seems to be involved in an RecBC-independent recombinational process of DNA repair. It may act with RecF and RecO. This Prochlorococcus marinus (strain AS9601) protein is Recombination protein RecR.